Here is a 299-residue protein sequence, read N- to C-terminus: S-methyl-5'-thioadenosine phosphorylase (299 aa).

Phosphate-binding positions include Ser-14, 56–57 (RH), and 89–90 (SA). Residue Met-191 participates in substrate binding. Residue Thr-192 coordinates phosphate. 215 to 217 (DYD) lines the substrate pocket.

Belongs to the PNP/MTAP phosphorylase family. MTAP subfamily. In terms of assembly, homohexamer. Dimer of a homotrimer.

It catalyses the reaction S-methyl-5'-thioadenosine + phosphate = 5-(methylsulfanyl)-alpha-D-ribose 1-phosphate + adenine. It functions in the pathway amino-acid biosynthesis; L-methionine biosynthesis via salvage pathway; S-methyl-5-thio-alpha-D-ribose 1-phosphate from S-methyl-5'-thioadenosine (phosphorylase route): step 1/1. In terms of biological role, catalyzes the reversible phosphorylation of S-methyl-5'-thioadenosine (MTA) to adenine and 5-methylthioribose-1-phosphate. Involved in the breakdown of MTA, a major by-product of polyamine biosynthesis. Responsible for the first step in the methionine salvage pathway after MTA has been generated from S-adenosylmethionine. Has broad substrate specificity with 6-aminopurine nucleosides as preferred substrates. This is S-methyl-5'-thioadenosine phosphorylase from Gloeobacter violaceus (strain ATCC 29082 / PCC 7421).